A 214-amino-acid chain; its full sequence is Adenylate kinase (214 aa).

Position 10 to 15 (10 to 15 (GAGKGT)) interacts with ATP. An NMP region spans residues 30–59 (STGDMLRAAIKAGTELGKQAKSVIDAGQLV). AMP contacts are provided by residues T31, R36, 57-59 (QLV), 85-88 (GFPR), and Q92. The tract at residues 122 to 159 (GRRAHLASGRTYHNVYNPPKVEGKDDVTGEDLVIREDD) is LID. Residues R123 and 132-133 (TY) each bind ATP. Positions 156 and 167 each coordinate AMP. K200 is a binding site for ATP.

Belongs to the adenylate kinase family. As to quaternary structure, monomer.

It localises to the cytoplasm. It carries out the reaction AMP + ATP = 2 ADP. It participates in purine metabolism; AMP biosynthesis via salvage pathway; AMP from ADP: step 1/1. Functionally, catalyzes the reversible transfer of the terminal phosphate group between ATP and AMP. Plays an important role in cellular energy homeostasis and in adenine nucleotide metabolism. This is Adenylate kinase from Photobacterium profundum (strain SS9).